Consider the following 72-residue polypeptide: Translation initiation factor IF-1 (72 aa).

Residues 2–72 form the S1-like domain; sequence AKEDCIEMQG…NKGRIIFRSR (71 aa).

Belongs to the IF-1 family. In terms of assembly, component of the 30S ribosomal translation pre-initiation complex which assembles on the 30S ribosome in the order IF-2 and IF-3, IF-1 and N-formylmethionyl-tRNA(fMet); mRNA recruitment can occur at any time during PIC assembly.

The protein localises to the cytoplasm. Functionally, one of the essential components for the initiation of protein synthesis. Stabilizes the binding of IF-2 and IF-3 on the 30S subunit to which N-formylmethionyl-tRNA(fMet) subsequently binds. Helps modulate mRNA selection, yielding the 30S pre-initiation complex (PIC). Upon addition of the 50S ribosomal subunit IF-1, IF-2 and IF-3 are released leaving the mature 70S translation initiation complex. This Pasteurella multocida (strain Pm70) protein is Translation initiation factor IF-1.